Reading from the N-terminus, the 84-residue chain is Small ribosomal subunit protein bS20 (84 aa).

Belongs to the bacterial ribosomal protein bS20 family.

Its function is as follows. Binds directly to 16S ribosomal RNA. The polypeptide is Small ribosomal subunit protein bS20 (Phocaeicola vulgatus (strain ATCC 8482 / DSM 1447 / JCM 5826 / CCUG 4940 / NBRC 14291 / NCTC 11154) (Bacteroides vulgatus)).